Reading from the N-terminus, the 330-residue chain is D-cysteine desulfhydrase (330 aa).

Lysine 52 is modified (N6-(pyridoxal phosphate)lysine).

The protein belongs to the ACC deaminase/D-cysteine desulfhydrase family. As to quaternary structure, homodimer. It depends on pyridoxal 5'-phosphate as a cofactor.

The enzyme catalyses D-cysteine + H2O = hydrogen sulfide + pyruvate + NH4(+) + H(+). In terms of biological role, catalyzes the alpha,beta-elimination reaction of D-cysteine and of several D-cysteine derivatives. It could be a defense mechanism against D-cysteine. The polypeptide is D-cysteine desulfhydrase (Serratia proteamaculans (strain 568)).